Here is a 176-residue protein sequence, read N- to C-terminus: Ribosome maturation factor RimM (176 aa).

One can recognise a PRC barrel domain in the interval 102-175 (KNDYYWNDII…TDKKFILVQW (74 aa)).

It belongs to the RimM family. As to quaternary structure, binds ribosomal protein uS19.

The protein localises to the cytoplasm. Its function is as follows. An accessory protein needed during the final step in the assembly of 30S ribosomal subunit, possibly for assembly of the head region. Essential for efficient processing of 16S rRNA. May be needed both before and after RbfA during the maturation of 16S rRNA. It has affinity for free ribosomal 30S subunits but not for 70S ribosomes. The chain is Ribosome maturation factor RimM from Buchnera aphidicola subsp. Acyrthosiphon pisum (strain APS) (Acyrthosiphon pisum symbiotic bacterium).